Reading from the N-terminus, the 606-residue chain is Probable translation initiation factor IF-2 (606 aa).

Positions 11-230 constitute a tr-type G domain; that stretch reads IRQPIVVVLG…LTGLVQRFMK (220 aa). A G1 region spans residues 20-27; it reads GHVDHGKT. GTP is bound at residue 20 to 27; the sequence is GHVDHGKT. The segment at 45–49 is G2; sequence EITQH. A G3 region spans residues 85 to 88; the sequence is DTPG. Residues 85–89 and 139–142 contribute to the GTP site; these read DTPGH and NKID. The G4 stretch occupies residues 139–142; it reads NKID. The G5 stretch occupies residues 207-209; the sequence is SAK.

This sequence belongs to the TRAFAC class translation factor GTPase superfamily. Classic translation factor GTPase family. IF-2 subfamily.

Its function is as follows. Function in general translation initiation by promoting the binding of the formylmethionine-tRNA to ribosomes. Seems to function along with eIF-2. This chain is Probable translation initiation factor IF-2, found in Staphylothermus marinus (strain ATCC 43588 / DSM 3639 / JCM 9404 / F1).